Consider the following 1202-residue polypeptide: Calmodulin-binding transcription activator 2 (1202 aa).

Residues 30-155 (RCPLLPPERL…YLNVPALEDC (126 aa)) constitute a DNA-binding region (CG-1). The Nuclear localization signal signature appears at 79-86 (RKKVKYRK). Disordered stretches follow at residues 263 to 322 (SIPH…SRGG), 361 to 409 (GTEP…AHTP), and 421 to 491 (PQAA…LFGG). The segment covering 270–283 (PEPPPLIAPLPPEL) has biased composition (pro residues). Low complexity-rich tracts occupy residues 289 to 299 (SPSSSSSSSSS) and 313 to 322 (TSRGGSSRGG). 2 stretches are compositionally biased toward pro residues: residues 365 to 374 (SAPPAPPSPA) and 460 to 476 (PPIP…PAPL). One can recognise an IPT/TIG domain in the interval 537-615 (DFSPEWSYPE…LSASVLFEYR (79 aa)). ANK repeat units follow at residues 712–745 (MSLL…DLEQ), 757–787 (CTPL…SIPD), and 791–821 (RLPL…SVEP). Disordered stretches follow at residues 817–874 (PSVE…ASEM) and 906–929 (PLSS…ADSP). Composition is skewed to low complexity over residues 826-846 (SPPS…SELS) and 906-917 (PLSSLPALPPAS). 2 IQ domains span residues 1049-1078 (YEAA…AAVI) and 1102-1131 (TQAA…AVLI).

It belongs to the CAMTA family. May interact with calmodulin. As to expression, detected in brain. Expressed at constant levels throughout the cell cycle in neuroblastoma cell lines.

Its subcellular location is the nucleus. Transcription activator. May act as tumor suppressor. The chain is Calmodulin-binding transcription activator 2 (CAMTA2) from Homo sapiens (Human).